The following is a 467-amino-acid chain: MSIGNIVQCIGAVVDIEFPRDAMPKVYDALVLEDSSDASFAEKGLTFEVQQQLGDGVVRTIALGSSDGLRRGMAVKSTGAPISVPVGHGTLGRIMDVLGRPIDEAGPIASDELRAIHQKAPKFDELSPSVDLLETGIKVIDLVCPFAKGGKVGLFGGAGVGKTVNMMELINNIAKQHSGLSVFAGVGERTREGNDFYHEMKDSNVLDKVAMVFGQMNEPPGNRLRVALTGLTMAERFRDEGRDILFFVDNIYRYTLAGTEVSALLGRMPSAVGYQPTLAEEMGKLQERITSTKTGSITSIQAVYVPADDLTDPSPATTFLHLDSTVVLSRDIAALGIYPAVDPLDSTSRQLDPQVVGTEHYEVARRVQQTLQRYKELRDIIAILGMDELSPEDKLAVSRARKIQRFLSQPFHVAEVFTGSPGKYVPLKETIRGFKMLVDGECDHLPEQAFYMVGSIDEAFEKAKKLQ.

156–163 is a binding site for ATP; the sequence is GGAGVGKT.

It belongs to the ATPase alpha/beta chains family. F-type ATPases have 2 components, CF(1) - the catalytic core - and CF(0) - the membrane proton channel. CF(1) has five subunits: alpha(3), beta(3), gamma(1), delta(1), epsilon(1). CF(0) has three main subunits: a(1), b(2) and c(9-12). The alpha and beta chains form an alternating ring which encloses part of the gamma chain. CF(1) is attached to CF(0) by a central stalk formed by the gamma and epsilon chains, while a peripheral stalk is formed by the delta and b chains.

It localises to the cell inner membrane. It catalyses the reaction ATP + H2O + 4 H(+)(in) = ADP + phosphate + 5 H(+)(out). Produces ATP from ADP in the presence of a proton gradient across the membrane. The catalytic sites are hosted primarily by the beta subunits. In Cupriavidus taiwanensis (strain DSM 17343 / BCRC 17206 / CCUG 44338 / CIP 107171 / LMG 19424 / R1) (Ralstonia taiwanensis (strain LMG 19424)), this protein is ATP synthase subunit beta.